Reading from the N-terminus, the 884-residue chain is Alanine--tRNA ligase (884 aa).

Positions 574, 578, 675, and 679 each coordinate Zn(2+).

The protein belongs to the class-II aminoacyl-tRNA synthetase family. Zn(2+) serves as cofactor.

The protein resides in the cytoplasm. It catalyses the reaction tRNA(Ala) + L-alanine + ATP = L-alanyl-tRNA(Ala) + AMP + diphosphate. Catalyzes the attachment of alanine to tRNA(Ala) in a two-step reaction: alanine is first activated by ATP to form Ala-AMP and then transferred to the acceptor end of tRNA(Ala). Also edits incorrectly charged Ser-tRNA(Ala) and Gly-tRNA(Ala) via its editing domain. The protein is Alanine--tRNA ligase of Ralstonia nicotianae (strain ATCC BAA-1114 / GMI1000) (Ralstonia solanacearum).